The chain runs to 467 residues: Regulatory protein NPR6 (467 aa).

The 85-residue stretch at 27–111 folds into the BTB domain; that stretch reads SDVTFSVEGR…LYSGQVSIVP (85 aa). Residues 117–131 form a C2HC NPR-type zinc finger; the sequence is RSNCGDRGCWHTHCT. Residues C120, C125, H127, and C130 each coordinate Zn(2+). ANK repeat units lie at residues 247-276, 277-306, 311-340, and 344-378; these read QKIR…LNLD, ESLA…DVNY, TGKT…DPNV, and DGIT…KLRL. The interval 434-467 is disordered; sequence RDIGDDNSNQREGMNLHHHHHDPSTMYHHHHHHF. Positions 449 to 467 are enriched in basic residues; it reads LHHHHHDPSTMYHHHHHHF.

The protein belongs to the plant 'ANKYRIN-BTB/POZ' family. 'NOOT-BOP-COCH-like' (NBCL) subfamily. As to quaternary structure, homodimer or heterodimer with BOP2. Interacts with PAN.

Its subcellular location is the cytoplasm. It localises to the nucleus. Its pathway is protein modification; protein ubiquitination. Its function is as follows. May act as a substrate-specific adapter of an E3 ubiquitin-protein ligase complex (CUL3-RBX1-BTB) which mediates the ubiquitination and subsequent proteasomal degradation of target proteins. Acts redundantly with BOP2. BOP1/2 promote leaf and floral meristem fate and determinacy in a pathway targeting AP1 and AGL24. BOP1/2 act as transcriptional co-regulators through direct interaction with TGA factors, including PAN, a direct regulator of AP1. Controls lateral organ fate through positive regulation of adaxial-abaxial polarity genes ATHB-14/PHB, YAB1/FIL and YAB3, and through positive regulation of LOB domain-containing genes LOB, LBD6/AS2 and LBD36. Promotes and maintains a developmentally determinate state in leaf cells through the negative regulation of JAG, JGL and class I KNOX genes. Is also involved in nectary development, formation of normal abscission zones (AZs) and suppression of bract formation, probably by regulating the cell wall disorganization. In Arabidopsis thaliana (Mouse-ear cress), this protein is Regulatory protein NPR6.